Reading from the N-terminus, the 298-residue chain is Ribonuclease HII (298 aa).

Positions 1 to 57 (MIREPQKSAKAASKSSAPRARSSVAKATSTKATSSKAASSKAAPSKAGADAGAAKPR) are disordered. Over residues 8-55 (SAKAASKSSAPRARSSVAKATSTKATSSKAASSKAAPSKAGADAGAAK) the composition is skewed to low complexity. The 189-residue stretch at 85–273 (WPVAGCDEAG…VAAAWRKIEG (189 aa)) folds into the RNase H type-2 domain. Residues D91, E92, and D182 each coordinate a divalent metal cation.

It belongs to the RNase HII family. The cofactor is Mn(2+). It depends on Mg(2+) as a cofactor.

It is found in the cytoplasm. It catalyses the reaction Endonucleolytic cleavage to 5'-phosphomonoester.. Its function is as follows. Endonuclease that specifically degrades the RNA of RNA-DNA hybrids. The polypeptide is Ribonuclease HII (Rhodopseudomonas palustris (strain BisB5)).